A 282-amino-acid polypeptide reads, in one-letter code: Small ribosomal subunit protein uS2 (282 aa).

The interval alanine 245–serine 265 is disordered.

It belongs to the universal ribosomal protein uS2 family.

This is Small ribosomal subunit protein uS2 from Chlamydia trachomatis serovar A (strain ATCC VR-571B / DSM 19440 / HAR-13).